A 349-amino-acid polypeptide reads, in one-letter code: Isopentenyl-diphosphate delta-isomerase (349 aa).

A substrate-binding site is contributed by 12 to 13 (RK). FMN-binding positions include 69–71 (GMT), Ser-99, and Asn-128. Gln-158 is a substrate binding site. Position 159 (Glu-159) interacts with Mg(2+). Residues Lys-189, Ser-214, Thr-219, 265–267 (GIR), and 286–287 (SG) each bind FMN.

Belongs to the IPP isomerase type 2 family. As to quaternary structure, homooctamer. Dimer of tetramers. It depends on FMN as a cofactor. NADPH serves as cofactor. Requires Mg(2+) as cofactor.

The protein resides in the cytoplasm. The catalysed reaction is isopentenyl diphosphate = dimethylallyl diphosphate. Its function is as follows. Involved in the biosynthesis of isoprenoids. Catalyzes the 1,3-allylic rearrangement of the homoallylic substrate isopentenyl (IPP) to its allylic isomer, dimethylallyl diphosphate (DMAPP). The protein is Isopentenyl-diphosphate delta-isomerase of Latilactobacillus sakei subsp. sakei (strain 23K) (Lactobacillus sakei subsp. sakei).